We begin with the raw amino-acid sequence, 478 residues long: Aspartyl/glutamyl-tRNA(Asn/Gln) amidotransferase subunit B 1 (478 aa).

It belongs to the GatB/GatE family. GatB subfamily. As to quaternary structure, heterotrimer of A, B and C subunits.

The enzyme catalyses L-glutamyl-tRNA(Gln) + L-glutamine + ATP + H2O = L-glutaminyl-tRNA(Gln) + L-glutamate + ADP + phosphate + H(+). It catalyses the reaction L-aspartyl-tRNA(Asn) + L-glutamine + ATP + H2O = L-asparaginyl-tRNA(Asn) + L-glutamate + ADP + phosphate + 2 H(+). Functionally, allows the formation of correctly charged Asn-tRNA(Asn) or Gln-tRNA(Gln) through the transamidation of misacylated Asp-tRNA(Asn) or Glu-tRNA(Gln) in organisms which lack either or both of asparaginyl-tRNA or glutaminyl-tRNA synthetases. The reaction takes place in the presence of glutamine and ATP through an activated phospho-Asp-tRNA(Asn) or phospho-Glu-tRNA(Gln). This Syntrophus aciditrophicus (strain SB) protein is Aspartyl/glutamyl-tRNA(Asn/Gln) amidotransferase subunit B 1.